A 255-amino-acid chain; its full sequence is Tabinhibitin 2 (255 aa).

Positions 1-23 are cleaved as a signal peptide; it reads MISILVSRFLLAALVLQYATIDA. The Cell attachment site signature appears at 32 to 34; that stretch reads RGD. In terms of domain architecture, SCP spans 67 to 211; the sequence is LSKINDVRDH…KARALLTCNF (145 aa).

The protein belongs to the CRISP family. In terms of tissue distribution, expressed in salivary glands.

The protein localises to the secreted. Inhibits platelet aggregation induced by all agonists tested (ADP, arachidonic acid, the thromboxane A2 analog U46619, thrombin, and snake venom snaclecs (TMVA that activates platelet through GPIB, and stejnulxin that specifically acts through GPVI (GP6))). May act by competing with fibrinogen for binding to glycoprotein IIb/IIIa (ITGA2B/ITGB3). The polypeptide is Tabinhibitin 2 (Tabanus yao (Horsefly)).